Here is a 346-residue protein sequence, read N- to C-terminus: Holliday junction branch migration complex subunit RuvB (346 aa).

The segment at T4–Y184 is large ATPase domain (RuvB-L). ATP is bound by residues R24, G65, K68, T69, T70, E131–F133, R174, Y184, and R221. Mg(2+) is bound at residue T69. Residues N185 to N255 are small ATPAse domain (RuvB-S). The tract at residues E258–A346 is head domain (RuvB-H). DNA contacts are provided by R294, R313, and R318.

The protein belongs to the RuvB family. As to quaternary structure, homohexamer. Forms an RuvA(8)-RuvB(12)-Holliday junction (HJ) complex. HJ DNA is sandwiched between 2 RuvA tetramers; dsDNA enters through RuvA and exits via RuvB. An RuvB hexamer assembles on each DNA strand where it exits the tetramer. Each RuvB hexamer is contacted by two RuvA subunits (via domain III) on 2 adjacent RuvB subunits; this complex drives branch migration. In the full resolvosome a probable DNA-RuvA(4)-RuvB(12)-RuvC(2) complex forms which resolves the HJ.

It is found in the cytoplasm. It catalyses the reaction ATP + H2O = ADP + phosphate + H(+). In terms of biological role, the RuvA-RuvB-RuvC complex processes Holliday junction (HJ) DNA during genetic recombination and DNA repair, while the RuvA-RuvB complex plays an important role in the rescue of blocked DNA replication forks via replication fork reversal (RFR). RuvA specifically binds to HJ cruciform DNA, conferring on it an open structure. The RuvB hexamer acts as an ATP-dependent pump, pulling dsDNA into and through the RuvAB complex. RuvB forms 2 homohexamers on either side of HJ DNA bound by 1 or 2 RuvA tetramers; 4 subunits per hexamer contact DNA at a time. Coordinated motions by a converter formed by DNA-disengaged RuvB subunits stimulates ATP hydrolysis and nucleotide exchange. Immobilization of the converter enables RuvB to convert the ATP-contained energy into a lever motion, pulling 2 nucleotides of DNA out of the RuvA tetramer per ATP hydrolyzed, thus driving DNA branch migration. The RuvB motors rotate together with the DNA substrate, which together with the progressing nucleotide cycle form the mechanistic basis for DNA recombination by continuous HJ branch migration. Branch migration allows RuvC to scan DNA until it finds its consensus sequence, where it cleaves and resolves cruciform DNA. This chain is Holliday junction branch migration complex subunit RuvB, found in Cellvibrio japonicus (strain Ueda107) (Pseudomonas fluorescens subsp. cellulosa).